A 252-amino-acid chain; its full sequence is GTP cyclohydrolase 1 type 2 homolog (252 aa).

A divalent metal cation is bound by residues histidine 65, histidine 66, aspartate 103, histidine 220, and glutamate 224.

Belongs to the GTP cyclohydrolase I type 2/NIF3 family. As to quaternary structure, homohexamer.

This is GTP cyclohydrolase 1 type 2 homolog from Pseudomonas aeruginosa (strain ATCC 15692 / DSM 22644 / CIP 104116 / JCM 14847 / LMG 12228 / 1C / PRS 101 / PAO1).